We begin with the raw amino-acid sequence, 609 residues long: All-trans-retinol 13,14-reductase (609 aa).

A signal peptide spans 1–21 (MWITALLLVVLLLVVVHRVYV).

This sequence belongs to the carotenoid/retinoid oxidoreductase family. CrtISO subfamily. Requires NAD(+) as cofactor. NADP(+) is required as a cofactor. The cofactor is FAD. As to expression, highly expressed in liver, kidney and heart.

It is found in the endoplasmic reticulum membrane. It catalyses the reaction all-trans-13,14-dihydroretinol + A = all-trans-retinol + AH2. Functionally, catalyzes the saturation of all-trans-retinol to all-trans-13,14-dihydroretinol. Does not exhibit any activity toward all-trans-retinoic acid, nor 9-cis, 11-cis or 13-cis-retinol isomers. May play a role in the metabolism of vitamin A. Independently of retinol conversion, may regulate liver metabolism upstream of MLXIPL/ChREBP. May play a role in adipocyte differentiation. In Rattus norvegicus (Rat), this protein is All-trans-retinol 13,14-reductase (Retsat).